The chain runs to 405 residues: Solute carrier family 35 member E2B (405 aa).

The tract at residues 1 to 28 is disordered; it reads MSSSVKTPALEELVPGSEEKPKGRSPLS. Transmembrane regions (helical) follow at residues 81 to 101, 106 to 126, 142 to 162, 167 to 187, 195 to 215, 219 to 241, 264 to 284, 296 to 316, 326 to 346, and 347 to 367; these read LWFFFSFCTLFLNKYILSLLG, MLGAVQMLSTTVIGCVKTLVP, FLMTMLFVGLMRFATVVLGLV, VAVSFAETVKSSAPIFTVIMS, TGLLVNLSLIPVMGGLALCTA, SFNVLGFSAALSTNIMDCLQNVF, AAAVAMLVPARVFFTDVPVIG, VVLLLLTDGVLFHLQSVTAYA, FSVASTVKHALSIWLSVIVFG, and NKITSLSAVGTALVTVGVLLY. A disordered region spans residues 380 to 405; that stretch reads SLAAATGRAPDDTVEPLLPQDPRQHP.

Belongs to the TPT transporter family. SLC35E subfamily.

It is found in the membrane. In terms of biological role, putative transporter. In Homo sapiens (Human), this protein is Solute carrier family 35 member E2B (SLC35E2B).